The following is an 843-amino-acid chain: Phosphatidylinositol-glycan-specific phospholipase D (843 aa).

Positions 1–23 (MSVGRLWSGLLLLLLFFCSRSSS) are cleaved as a signal peptide. N-linked (GlcNAc...) asparagine glycosylation is found at asparagine 94, asparagine 271, asparagine 292, asparagine 308, and asparagine 322. FG-GAP repeat units follow at residues 368-429 (SPSA…GLPP), 435-498 (DKEA…GRLS), 500-560 (SPNI…RNDK), 564-625 (TLDE…SLGR), 635-695 (QREI…GATR), 707-773 (ALFS…TLGD), and 791-843 (QYVL…FSSD). N-linked (GlcNAc...) asparagine glycans are attached at residues asparagine 483, asparagine 502, asparagine 592, asparagine 605, and asparagine 661.

The protein belongs to the GPLD1 family. As to quaternary structure, monomer. Glycosylated.

It localises to the secreted. The enzyme catalyses a 6-(alpha-D-glucosaminyl)-1-(1,2-diacyl-sn-glycero-3-phospho)-1D-myo-inositol + H2O = 6-(alpha-D-glucosaminyl)-1D-myo-inositol + a 1,2-diacyl-sn-glycero-3-phosphate + H(+). In terms of biological role, this protein hydrolyzes the inositol phosphate linkage in proteins anchored by phosphatidylinositol glycans (GPI-anchor) thus releasing these proteins from the membrane. The sequence is that of Phosphatidylinositol-glycan-specific phospholipase D (Gpld1) from Rattus norvegicus (Rat).